The sequence spans 387 residues: Homoserine O-succinyltransferase (387 aa).

The region spanning 49 to 358 (NAILICHALS…DAEQGHDSFL (310 aa)) is the AB hydrolase-1 domain. Serine 156 serves as the catalytic Nucleophile. Arginine 226 is a binding site for substrate. Residues aspartate 321 and histidine 354 contribute to the active site. Residue aspartate 355 coordinates substrate.

The protein belongs to the AB hydrolase superfamily. MetX family. Homodimer.

The protein resides in the cytoplasm. It carries out the reaction L-homoserine + succinyl-CoA = O-succinyl-L-homoserine + CoA. It functions in the pathway amino-acid biosynthesis; L-methionine biosynthesis via de novo pathway; O-succinyl-L-homoserine from L-homoserine: step 1/1. Requires MetW for activity. Functionally, transfers a succinyl group from succinyl-CoA to L-homoserine, forming succinyl-L-homoserine. The chain is Homoserine O-succinyltransferase from Acinetobacter baylyi (strain ATCC 33305 / BD413 / ADP1).